The sequence spans 358 residues: Protein RecA (358 aa).

Residue 76 to 83 (GPESSGKT) participates in ATP binding.

This sequence belongs to the RecA family.

It localises to the cytoplasm. Its function is as follows. Can catalyze the hydrolysis of ATP in the presence of single-stranded DNA, the ATP-dependent uptake of single-stranded DNA by duplex DNA, and the ATP-dependent hybridization of homologous single-stranded DNAs. It interacts with LexA causing its activation and leading to its autocatalytic cleavage. The polypeptide is Protein RecA (Rhodospirillum centenum (strain ATCC 51521 / SW)).